The chain runs to 238 residues: Sugar fermentation stimulation protein homolog (238 aa).

Belongs to the SfsA family.

The protein is Sugar fermentation stimulation protein homolog of Brucella abortus (strain S19).